The primary structure comprises 283 residues: MEMO1 family protein MK0963 (283 aa).

This sequence belongs to the MEMO1 family.

The sequence is that of MEMO1 family protein MK0963 from Methanopyrus kandleri (strain AV19 / DSM 6324 / JCM 9639 / NBRC 100938).